Consider the following 447-residue polypeptide: MSMTPREIVHELNRHIIGQDDAKRAVAIALRNRWRRMQLPAELRAEVTPKNILMIGPTGVGKTEIARRLAKLANAPFLKVEATKFTEVGYVGRDVESIIRDLADAALKMLREQEIIRVRHRAEDAAEDRILDALLPQARVTSFSEEAAQTSSDSNTRQLFRKRLREGQLDDKEIEIEVADAVGVEIAAPPGMEEMTNQLQSLFANMGKGKRKARKLKVKEALKMVRDEEASRLVNEEELKAKALEAVEQHGIVFIDEIDKVAKRGNVGGADVSREGVQRDLLPLIEGCTVNTKLGMVKTDHILFIASGAFHLSKPSDLVPELQGRLPIRVELKALTPEDFERILQEPHASLTEQYQALLKTEGLNIAFQADGIKRLAEIAYQVNEKTENIGARRLHTLLERLLEEVSFSAGDLASTHDEAPIQIDAAYVNSHLGELAQNEDLSRYIL.

Residues Ile-17, 59-64, Asp-256, Glu-321, and Arg-393 contribute to the ATP site; that span reads GVGKTE.

Belongs to the ClpX chaperone family. HslU subfamily. A double ring-shaped homohexamer of HslV is capped on each side by a ring-shaped HslU homohexamer. The assembly of the HslU/HslV complex is dependent on binding of ATP.

It localises to the cytoplasm. In terms of biological role, ATPase subunit of a proteasome-like degradation complex; this subunit has chaperone activity. The binding of ATP and its subsequent hydrolysis by HslU are essential for unfolding of protein substrates subsequently hydrolyzed by HslV. HslU recognizes the N-terminal part of its protein substrates and unfolds these before they are guided to HslV for hydrolysis. The polypeptide is ATP-dependent protease ATPase subunit HslU (Pseudomonas putida (strain GB-1)).